The following is a 320-amino-acid chain: MHRTTRIKITELNPHLMCVLCGGYFIDATTIIECLHSFCKMCIVRYLETSKYCPICDVQVHKTKPLLNIRSDKTLQDIVYKLVPGLFKNEMKRRRDFYAEHPSVDAANGSNEDRGEVADEDKRIITDDEIISLSIEFFDHRAQQQGCTEERQKEEVNNKRYLQCPAAMTVMHLRKFLRSKMDIPPTYQIEVMYEDEPLKDYYTLMDIAYIYTWRRNGPLPLKYRVRPSCKKMKITHPQEGLNNANRSESDSASDKACSPAGVPSTSSPLPSPSTLVQPSQPHFTHISSPINGTTMTSPNRQFNFSKVRKSALNGSSTSSG.

An RING-type zinc finger spans residues 18–57; the sequence is CVLCGGYFIDATTIIECLHSFCKMCIVRYLETSKYCPICD. Residues 81-95 carry the Nuclear localization signal motif; it reads KLVPGLFKNEMKRRR. The tract at residues 234-320 is disordered; the sequence is ITHPQEGLNN…ALNGSSTSSG (87 aa). The segment covering 262–281 has biased composition (low complexity); that stretch reads VPSTSSPLPSPSTLVQPSQP. The segment covering 285 to 304 has biased composition (polar residues); it reads HISSPINGTTMTSPNRQFNF.

As to quaternary structure, component of a PRC1-like complex. Homodimer. Interacts with cbx2.

The protein resides in the nucleus. Its function is as follows. Component of a Polycomb group (PcG) multiprotein PRC1-like complex, a complex class required to maintain the transcriptionally repressive state of many genes, including Hox genes, throughout development. PcG PRC1 complex acts via chromatin remodeling and modification of histones; it mediates monoubiquitination of histone H2A 'Lys-119', rendering chromatin heritably changed in its expressibility. In the PRC1 complex, it is required to stimulate the E3 ubiquitin-protein ligase activity of rnf2. The protein is Polycomb complex protein BMI-1-A (bmi1a) of Danio rerio (Zebrafish).